A 232-amino-acid polypeptide reads, in one-letter code: ATP-dependent dethiobiotin synthetase BioD (232 aa).

ATP is bound at residue 16-21; sequence GVGKTV. Thr20 serves as a coordination point for Mg(2+). Residue Lys41 is part of the active site. Thr45 serves as a coordination point for substrate. ATP is bound by residues Asp52, 111–114, 171–172, 200–202, and Glu207; these read EGIG, NQ, and PLS. Asp52 and Glu111 together coordinate Mg(2+).

This sequence belongs to the dethiobiotin synthetase family. In terms of assembly, homodimer. Mg(2+) serves as cofactor.

The protein resides in the cytoplasm. It catalyses the reaction (7R,8S)-7,8-diammoniononanoate + CO2 + ATP = (4R,5S)-dethiobiotin + ADP + phosphate + 3 H(+). The catalysed reaction is (7R,8S)-8-amino-7-(carboxyamino)nonanoate + ATP = (4R,5S)-dethiobiotin + ADP + phosphate + H(+). It functions in the pathway cofactor biosynthesis; biotin biosynthesis; biotin from 7,8-diaminononanoate: step 1/2. Catalyzes a mechanistically unusual reaction, the ATP-dependent insertion of CO2 between the N7 and N8 nitrogen atoms of 7,8-diaminopelargonic acid (DAPA, also called 7,8-diammoniononanoate) to form a ureido ring. This archaea does not encode bioA (which catalyzes the formation of the precursor for this reaction in the cannonical pathway), instead it encodes bioU, which replaces bioA and also performs the first half of the cannonical BioD reaction. Thus in this archaea BioD has a different substrate. The protein is ATP-dependent dethiobiotin synthetase BioD of Haloferax mediterranei (strain ATCC 33500 / DSM 1411 / JCM 8866 / NBRC 14739 / NCIMB 2177 / R-4) (Halobacterium mediterranei).